A 146-amino-acid chain; its full sequence is Large ribosomal subunit protein uL15 (146 aa).

Residues 1 to 13 show a composition bias toward basic and acidic residues; it reads MKLHELKPAEGSR. The segment at 1–52 is disordered; that stretch reads MKLHELKPAEGSRKVRNRVGRGIGSGNGKTAGKGHKGQNARSGGGVRLGFEG. Composition is skewed to gly residues over residues 21-31 and 42-52; these read RGIGSGNGKTA and SGGGVRLGFEG.

This sequence belongs to the universal ribosomal protein uL15 family. As to quaternary structure, part of the 50S ribosomal subunit.

Binds to the 23S rRNA. This is Large ribosomal subunit protein uL15 from Bacillus cereus (strain B4264).